We begin with the raw amino-acid sequence, 746 residues long: Mediator of RNA polymerase II transcription subunit 25 (746 aa).

The tract at residues 1–226 (MVPGSEGPAR…PRHMVLVRGL (226 aa)) is interaction with the Mediator complex. 2 disordered regions span residues 233 to 273 (GSAP…QQYQ) and 298 to 390 (GLGP…PALG). Positions 238–251 (PLQPKQPVPLPPAA) are enriched in pro residues. The span at 252–262 (PAGATLSTAPQ) shows a compositional bias: low complexity. Positions 329-342 (PPGPPGAPKPPPAS) are enriched in pro residues. The span at 343-354 (QPSLVSTVAPGP) shows a compositional bias: low complexity. The segment at 389 to 543 (LGGQQSVSNK…VNGIRQVITN (155 aa)) is interaction with VP16. Residues 395-545 (VSNKLLAWSG…GIRQVITNHK (151 aa)) are interaction with CREBBP. Residues 548 to 746 (QQQKLEQQRG…MEDDILMDLI (199 aa)) form a disordered region. Interaction with RARA stretches follow at residues 563-652 (APPG…LLNP) and 639-706 (PGAN…WPAQ). Over residues 599 to 610 (AAAGQPQPQGAA) the composition is skewed to low complexity. The segment covering 611–633 (PAPPGAPQGPPGAAPGPPPPGPL) has biased composition (pro residues). An LXXLL motif motif is present at residues 645–649 (LRSLL). 3 stretches are compositionally biased toward pro residues: residues 651–663 (NPPP…PPPQ), 672–682 (PGAPALLPPPH), and 690–701 (LGPPLLHPPPAQ). Arg-724 is subject to Asymmetric dimethylarginine. Residues 737–746 (MEDDILMDLI) are compositionally biased toward acidic residues.

This sequence belongs to the Mediator complex subunit 25 family. Component of the Mediator complex, which is composed of MED1, MED4, MED6, MED7, MED8, MED9, MED10, MED11, MED12, MED13, MED13L, MED14, MED15, MED16, MED17, MED18, MED19, MED20, MED21, MED22, MED23, MED24, MED25, MED26, MED27, MED29, MED30, MED31, CCNC, CDK8 and CDC2L6/CDK11. The MED12, MED13, CCNC and CDK8 subunits form a distinct module termed the CDK8 module. Mediator containing the CDK8 module is less active than Mediator lacking this module in supporting transcriptional activation. Individual preparations of the Mediator complex lacking one or more distinct subunits have been variously termed ARC, CRSP, DRIP, PC2, SMCC and TRAP. Interacts with CREBBP. Interacts with ESR1, GR, RARA, RXRA and THRB in a ligand-dependent fashion. Binds the Herpes simplex virus activator VP16.

It is found in the nucleus. In terms of biological role, component of the Mediator complex, a coactivator involved in the regulated transcription of nearly all RNA polymerase II-dependent genes. Mediator functions as a bridge to convey information from gene-specific regulatory proteins to the basal RNA polymerase II transcription machinery. Mediator is recruited to promoters by direct interactions with regulatory proteins and serves as a scaffold for the assembly of a functional preinitiation complex with RNA polymerase II and the general transcription factors. Required for RARA/RXRA-mediated transcription. The protein is Mediator of RNA polymerase II transcription subunit 25 (MED25) of Bos taurus (Bovine).